A 62-amino-acid chain; its full sequence is uncharacterized protein (62 aa).

It is found in the mitochondrion. This is an uncharacterized protein from Marchantia polymorpha (Common liverwort).